The following is a 291-amino-acid chain: Beta-lactamase CTX-M-25 (291 aa).

The signal sequence occupies residues 1–30; it reads MMRKSVRRAMLMTTACVSLLLASVPLCAQA. The Nucleophile; acyl-ester intermediate role is filled by Ser73. A beta-lactam-binding residues include Lys76, Ser133, Glu169, and Ser240.

This sequence belongs to the class-A beta-lactamase family. Monomer.

The protein localises to the secreted. It catalyses the reaction a beta-lactam + H2O = a substituted beta-amino acid. With respect to regulation, inhibited by the beta-lactamase-blocking agents clavulanic acid and tazobactam; in the DH10B strain. Functionally, extended-spectrum beta-lactamase (ESBL) which confers resistance to penicillins, as well as first, second and third-generation cephalosporins. Has cefotaxime-hydrolyzing activity. Inactive against cephalosporin antibiotic, cefoxitin, and the carbapenem, imipenem. In Escherichia coli, this protein is Beta-lactamase CTX-M-25.